The chain runs to 95 residues: Small ribosomal subunit protein uS19 (95 aa).

The protein belongs to the universal ribosomal protein uS19 family.

Its function is as follows. Protein S19 forms a complex with S13 that binds strongly to the 16S ribosomal RNA. The polypeptide is Small ribosomal subunit protein uS19 (rpsS) (Treponema pallidum (strain Nichols)).